A 347-amino-acid polypeptide reads, in one-letter code: S-adenosylmethionine:tRNA ribosyltransferase-isomerase (347 aa).

The protein belongs to the QueA family. Monomer.

Its subcellular location is the cytoplasm. The enzyme catalyses 7-aminomethyl-7-carbaguanosine(34) in tRNA + S-adenosyl-L-methionine = epoxyqueuosine(34) in tRNA + adenine + L-methionine + 2 H(+). It participates in tRNA modification; tRNA-queuosine biosynthesis. Its function is as follows. Transfers and isomerizes the ribose moiety from AdoMet to the 7-aminomethyl group of 7-deazaguanine (preQ1-tRNA) to give epoxyqueuosine (oQ-tRNA). This is S-adenosylmethionine:tRNA ribosyltransferase-isomerase from Xylella fastidiosa (strain M12).